Consider the following 83-residue polypeptide: Transmembrane protein EP84R (83 aa).

The next 2 helical transmembrane spans lie at 31-51 and 59-79; these read VIGI…IIIL and AGSV…FLIY.

It belongs to the asfivirus EP84R family.

It localises to the virion membrane. The chain is Transmembrane protein EP84R from Ornithodoros (relapsing fever ticks).